A 640-amino-acid polypeptide reads, in one-letter code: Choline O-acetyltransferase (640 aa).

Residues 1–22 (MPDLEKDMQKKEKDSRSKDEPA) are compositionally biased toward basic and acidic residues. The segment at 1-28 (MPDLEKDMQKKEKDSRSKDEPAVPKLPV) is disordered. The active-site Proton acceptor is the His334. Residues 412–424 (GKEFIKKQKTSPD), Ser450, and Gln551 contribute to the CoA site.

The protein belongs to the carnitine/choline acetyltransferase family. In terms of tissue distribution, detected in brain and in embryonic retina.

The catalysed reaction is choline + acetyl-CoA = acetylcholine + CoA. Functionally, catalyzes the reversible synthesis of acetylcholine (ACh) from acetyl CoA and choline at cholinergic synapses. This chain is Choline O-acetyltransferase (CHAT), found in Gallus gallus (Chicken).